The primary structure comprises 444 residues: tRNA pseudouridine synthase Pus10 (444 aa).

Catalysis depends on Asp265, which acts as the Nucleophile. The substrate site is built by Tyr333 and Tyr405.

It belongs to the pseudouridine synthase Pus10 family.

It catalyses the reaction uridine(54) in tRNA = pseudouridine(54) in tRNA. It carries out the reaction uridine(55) in tRNA = pseudouridine(55) in tRNA. Functionally, responsible for synthesis of pseudouridine from uracil-54 and uracil-55 in the psi GC loop of transfer RNAs. The polypeptide is tRNA pseudouridine synthase Pus10 (Thermofilum pendens (strain DSM 2475 / Hrk 5)).